The sequence spans 573 residues: ESX-1 secretion system protein EccA1 (573 aa).

Gly334 to Thr341 lines the ATP pocket.

Belongs to the CbxX/CfxQ family. As to quaternary structure, part of the ESX-1 / type VII secretion system (T7SS), which is composed of cytosolic and membrane components.

The protein resides in the cytoplasm. Functionally, part of the ESX-1 specialized secretion system, which delivers several virulence factors to host cells during infection, including the key virulence factors EsxA (ESAT-6) and EsxB (CFP-10). EccA1 exhibits ATPase activity and may provide energy for the export of ESX-1 substrates. The sequence is that of ESX-1 secretion system protein EccA1 from Mycobacterium tuberculosis (strain CDC 1551 / Oshkosh).